A 555-amino-acid chain; its full sequence is CTP synthase (555 aa).

The tract at residues 1-265 (MTRYIFITGG…GNRVCEKLNI (265 aa)) is amidoligase domain. Ser-13 serves as a coordination point for CTP. Ser-13 provides a ligand contact to UTP. Residues 14-19 (SLGKGI) and Asp-71 each bind ATP. 2 residues coordinate Mg(2+): Asp-71 and Glu-139. CTP-binding positions include 146–148 (DIE), 186–191 (KTKPTQ), and Lys-222. Residues 186-191 (KTKPTQ) and Lys-222 each bind UTP. The 252-residue stretch at 290-541 (TVAVVGKYVD…IKAGLAAKEA (252 aa)) folds into the Glutamine amidotransferase type-1 domain. Residue Gly-351 participates in L-glutamine binding. Catalysis depends on Cys-378, which acts as the Nucleophile; for glutamine hydrolysis. L-glutamine-binding positions include 379 to 382 (LGMQ), Glu-402, and Arg-469. Active-site residues include His-514 and Glu-516.

Belongs to the CTP synthase family. In terms of assembly, homotetramer.

The enzyme catalyses UTP + L-glutamine + ATP + H2O = CTP + L-glutamate + ADP + phosphate + 2 H(+). The catalysed reaction is L-glutamine + H2O = L-glutamate + NH4(+). It catalyses the reaction UTP + NH4(+) + ATP = CTP + ADP + phosphate + 2 H(+). It functions in the pathway pyrimidine metabolism; CTP biosynthesis via de novo pathway; CTP from UDP: step 2/2. With respect to regulation, allosterically activated by GTP, when glutamine is the substrate; GTP has no effect on the reaction when ammonia is the substrate. The allosteric effector GTP functions by stabilizing the protein conformation that binds the tetrahedral intermediate(s) formed during glutamine hydrolysis. Inhibited by the product CTP, via allosteric rather than competitive inhibition. Functionally, catalyzes the ATP-dependent amination of UTP to CTP with either L-glutamine or ammonia as the source of nitrogen. Regulates intracellular CTP levels through interactions with the four ribonucleotide triphosphates. The polypeptide is CTP synthase (Coxiella burnetii (strain Dugway 5J108-111)).